The sequence spans 493 residues: MSDTIQQEAPDNLQVTPTHGRSFAEKVWSACLGLIQENINTLAFKTWFLPIRPLSFSGSELTIEVPSQFFYEWIEENYSVHVKQALRQVIGPEAKLMYSIVIDKSQGQPVTIELPHQIDAAPAERSVRPEAPGQKASAERERLEIARPRFESNLNPKYTFSTLVRGDCNSLAFAASKSIAQNPGQNAFNPLVIYGGVGLGKTHMMQAIGNSVLENRITDAVLYVSSEKFAIDFVNAIQNGNIQEFSAFYRNIDVLIIDDIQFFAGKEKTQEEIFHIFNTLHQSNKQIILSADRPIKEIKGIEDRLISRFNWGLSTDIQAPDYETRKAIIQSKLKQSGVSLDPVVIEFIATNVTSNVRELEGCIVKLLAAHSLDNQEIDLQFAKSTLKDIIRYNTKQLTLETIEKAVCSYFSITSNDLKGKSKKKEIAVGRQIAMYLSKDMTDSSLKTIGLHFGGRDHSTVIHALNTIEKKIAASNEERKKIEELRKRIEIMSM.

The interval 1-105 is domain I, interacts with DnaA modulators; it reads MSDTIQQEAP…LMYSIVIDKS (105 aa). The interval 105–152 is domain II; that stretch reads SQGQPVTIELPHQIDAAPAERSVRPEAPGQKASAERERLEIARPRFES. The tract at residues 121–140 is disordered; it reads APAERSVRPEAPGQKASAER. The tract at residues 153–370 is domain III, AAA+ region; that stretch reads NLNPKYTFST…GCIVKLLAAH (218 aa). Positions 198, 200, 201, and 202 each coordinate ATP. The interval 371 to 493 is domain IV, binds dsDNA; that stretch reads SLDNQEIDLQ…LRKRIEIMSM (123 aa).

Belongs to the DnaA family. In terms of assembly, oligomerizes as a right-handed, spiral filament on DNA at oriC.

The protein resides in the cytoplasm. Its function is as follows. Plays an essential role in the initiation and regulation of chromosomal replication. ATP-DnaA binds to the origin of replication (oriC) to initiate formation of the DNA replication initiation complex once per cell cycle. Binds the DnaA box (a 9 base pair repeat at the origin) and separates the double-stranded (ds)DNA. Forms a right-handed helical filament on oriC DNA; dsDNA binds to the exterior of the filament while single-stranded (ss)DNA is stabiized in the filament's interior. The ATP-DnaA-oriC complex binds and stabilizes one strand of the AT-rich DNA unwinding element (DUE), permitting loading of DNA polymerase. After initiation quickly degrades to an ADP-DnaA complex that is not apt for DNA replication. Binds acidic phospholipids. The protein is Chromosomal replication initiator protein DnaA of Chlorobaculum tepidum (strain ATCC 49652 / DSM 12025 / NBRC 103806 / TLS) (Chlorobium tepidum).